Here is a 549-residue protein sequence, read N- to C-terminus: Hydroxylamine reductase (549 aa).

Positions 5, 8, 17, and 23 each coordinate [4Fe-4S] cluster. 8 residues coordinate hybrid [4Fe-2O-2S] cluster: His250, Glu274, Cys318, Cys404, Cys432, Cys457, Glu491, and Lys493. At Cys404 the chain carries Cysteine persulfide.

It belongs to the HCP family. [4Fe-4S] cluster is required as a cofactor. Requires hybrid [4Fe-2O-2S] cluster as cofactor.

It localises to the cytoplasm. The enzyme catalyses A + NH4(+) + H2O = hydroxylamine + AH2 + H(+). Catalyzes the reduction of hydroxylamine to form NH(3) and H(2)O. The sequence is that of Hydroxylamine reductase from Geobacter metallireducens (strain ATCC 53774 / DSM 7210 / GS-15).